A 397-amino-acid chain; its full sequence is Elongation factor Tu (397 aa).

The region spanning 10–207 (KPHCNIGTIG…EVDKYIPQPE (198 aa)) is the tr-type G domain. A G1 region spans residues 19–26 (GHVDHGKT). 19-26 (GHVDHGKT) is a binding site for GTP. Thr-26 serves as a coordination point for Mg(2+). The tract at residues 61-65 (GITIS) is G2. Positions 82–85 (DCPG) are G3. Residues 82 to 86 (DCPGH) and 137 to 140 (NKCD) contribute to the GTP site. Positions 137 to 140 (NKCD) are G4. The segment at 175–177 (SAL) is G5.

The protein belongs to the TRAFAC class translation factor GTPase superfamily. Classic translation factor GTPase family. EF-Tu/EF-1A subfamily. Monomer.

The protein resides in the cytoplasm. The catalysed reaction is GTP + H2O = GDP + phosphate + H(+). In terms of biological role, GTP hydrolase that promotes the GTP-dependent binding of aminoacyl-tRNA to the A-site of ribosomes during protein biosynthesis. This Azorhizobium caulinodans (strain ATCC 43989 / DSM 5975 / JCM 20966 / LMG 6465 / NBRC 14845 / NCIMB 13405 / ORS 571) protein is Elongation factor Tu.